We begin with the raw amino-acid sequence, 290 residues long: Ribosomal RNA small subunit methyltransferase A (290 aa).

Residues Asn27, Leu29, Gly54, Glu75, Asp100, and Asn125 each contribute to the S-adenosyl-L-methionine site.

It belongs to the class I-like SAM-binding methyltransferase superfamily. rRNA adenine N(6)-methyltransferase family. RsmA subfamily.

It is found in the cytoplasm. It carries out the reaction adenosine(1518)/adenosine(1519) in 16S rRNA + 4 S-adenosyl-L-methionine = N(6)-dimethyladenosine(1518)/N(6)-dimethyladenosine(1519) in 16S rRNA + 4 S-adenosyl-L-homocysteine + 4 H(+). Functionally, specifically dimethylates two adjacent adenosines (A1518 and A1519) in the loop of a conserved hairpin near the 3'-end of 16S rRNA in the 30S particle. May play a critical role in biogenesis of 30S subunits. This is Ribosomal RNA small subunit methyltransferase A from Streptococcus uberis (strain ATCC BAA-854 / 0140J).